A 159-amino-acid chain; its full sequence is uncharacterized protein (159 aa).

Positions Met-1–Pro-139 constitute an N-acetyltransferase domain.

This is an uncharacterized protein from Bacillus subtilis (strain 168).